Consider the following 508-residue polypeptide: Photosystem II CP47 reaction center protein (508 aa).

The next 6 helical transmembrane spans lie at 21 to 36, 101 to 115, 140 to 156, 203 to 218, 237 to 252, and 457 to 472; these read SVHI…WAGS, IVFS…IWHW, GIHL…FGAF, IAAG…FHLS, VLSS…AFVV, and SFAL…HGAR.

The protein belongs to the PsbB/PsbC family. PsbB subfamily. PSII is composed of 1 copy each of membrane proteins PsbA, PsbB, PsbC, PsbD, PsbE, PsbF, PsbH, PsbI, PsbJ, PsbK, PsbL, PsbM, PsbT, PsbX, PsbY, PsbZ, Psb30/Ycf12, at least 3 peripheral proteins of the oxygen-evolving complex and a large number of cofactors. It forms dimeric complexes. Requires Binds multiple chlorophylls. PSII binds additional chlorophylls, carotenoids and specific lipids. as cofactor.

The protein localises to the plastid. Its subcellular location is the chloroplast thylakoid membrane. One of the components of the core complex of photosystem II (PSII). It binds chlorophyll and helps catalyze the primary light-induced photochemical processes of PSII. PSII is a light-driven water:plastoquinone oxidoreductase, using light energy to abstract electrons from H(2)O, generating O(2) and a proton gradient subsequently used for ATP formation. The polypeptide is Photosystem II CP47 reaction center protein (Ipomoea purpurea (Common morning glory)).